A 7603-amino-acid polypeptide reads, in one-letter code: MTYCRKDKSTIELTAATAAPVSCEGAVTENFRTSRRSKEDPLVHLHSTLHGRSPLRQTCVNMDRVSPFCGTEGCVGSCAGSYCMGYGQCQCDINPHRARGERRTDRHGCTTGVHAHWTGAARRHASSLHPRGHRCQGKRRPCPLSLFPGSCRPCDSFGYPRSSMSSLASDANNSSSAADIVHDFCTKICDPVSVSSFAEVGGSPRSSDASSRPLGKALRKSRLVGFFLVPVFVVFFVLSSDATSSTRGVGVLSARADREEKSSVSSSSRASSSPGASALLVQTTYAENPYRDTKAAGYTGRSSRRSARARRRRAADGGEGKGFLGDMLNKSMLETRSRSTAADPYQQFTSCGSGMFVSTEVGEDGGVEKTAKVDESMNCWNVCAFVEDLVYDQCSSTPSPTECITRALKSHSLVPDGYKGNCRYSSPQDVSPTFWDAEPDSEFCLDKGMNAWLKSDSWDDFVSKKPPGCIYPKQDPSIPASTPTAYVNDATSGLGEALASLVPVEYYVVVRDAEEAMNNPIEYGAYVASSIVPREYWDKVSSDAKDGWHVARAFSVPDKPAEFAALTTAADGSSTSANICLYAAVETANHSDGTSKTFVNYGMIAQTETCEGKIGVLPVADIRGSGILDSSAQEISRKTGFNLCVARRWVTRHLSENGIKSTAQVPMFQVALDAPCASFVSAYAYTDEVPSHWGQWEQYFVAKTYPLTRGIYGIPDAARCPWSYAVQYGLKCYTSIEYDFYMYLGSFAEGQIACRRLVSNIQVPSDFSRLAVMQTDDDEKIMTFLSEPGTFTWVGLFQGSQALVPVKTGFMDSGRVSEQTCPAEVLATGQFSHRNSEIEEKCLQAGANISTPGWKTTWGGLDGNSEIAPWDIKWCSGHPQTERNNRYVDCAGLRVNDNMESCIESAPCDEANPVFCTYPVDYGPYLETTTPQGQSSTGPRLPPYIGCLLRKTCVIQFTLTRPDTSSDTTLPGAHGTIWGVPSEGGFLAVKANCMAVNGPMIGPYRVTSTVNLASLAAFRSARPGLYELCYCNTNSPAVSVVTTGATPDTQCMHQSSFNQLIASLGLTKYNENVGFSQAVQLPTASATVSTKSVLALVGRDSWGGVPTVYCGWQSTGRSCPFDVRVTSNGSWKLRPFTTKLTFYPVDSSVLVTDLCTSEESPAIVVSVTIQSGDTGSAILDAENATSLFYSVCEGKKFLGYVVLKEIGNAVEAKISLENVVLSDQTNVNADDVTLILRGEFTDALLLRSKVVAVSVESATDSDCSTLTLASLPESSVTIVPFPTLSSGTGDLVELHFKAGPSAKKLCWMETIAMGADRDSRTFSTYLVTFPRASTVRELSVEDSRCFGPSDHPCRFRVTPEPVPSEENPINASPYLPSTFRVYVMKDGCPSSAEDSVLDEIDNSSGADPVAANAKGILLELEWESESAMQAVLQPQYFPWLQAIGSANLCWVYTRGNAETECPIGSTSCGDTFGKMYAVGPTSDVQANVVVCLPGAPEPCLTTVEGVNLNLYERITDRMAALDTCGSDTGIGLLTPWGHYAGLIGSSLSALEDGVLRSRSGPSHPSSVSQPSPSFALLGQGLSQTKASFHGSDGRSRGSKSLMWSFATDNDLTDPSSGNTPSNATSLVFQIPFASEGGSLELCFRTGESDSDDLTRFTEPVGHVVYGWRLHGATLAVEATTNPNAVFYRVTVVSGIDAAGALSSTVVYLKPVKGYPEGTTVPCDYDLDTSGDVAHQVQGPVVSSDVDDVTWDDDLGGTSSRGSSASFKIPLLHYQGMAVCWSQLVEASPAQGSHSQSPFSVRSATLVGYFAGPSLPVLAENSDVAVACALAKTTCEIAVGPGRAAVDYTGGLAITPAFLDVRVTVVLDAELLAAPCPDPSDPGYENAIRATSQTRLVLPSDVLTPERQTFLVDSNARELLKTNGKAGICYRVDNCATESDAPTSDCTKFLGLALWVGPTAETPDKVTICKAQQRDCLLRIDGSNMDVVDYSAPRAAYAATCGEPGQYVTATLVQTSSTPSQETLDSDLVSNEHASWAAFAFAIQPASLWRLCWNPFDAATMQDEPAEDRFVVNRGFLVFPATPEVESERVELDSSSQTMLRLVISAMVTEAALEKVSRPDTPVTEHYVYVSPVLSHANGVAEDVVCADADEETKVQWTSVDAKTPTAFGNEDSNDAATASRIHYSITAISVEQQVCWRSVYRAEDGTVVHEERIYLSKVPAVLTPELDTSVANQVSPLLTFCSLGTEEMCLVTLKPRASSDSTPATFPPGGELYVVHEGDCPSERADPKLVNAAGDGVPTTDTTVVRLHVVTFDTTRVALGFPEDDRTWMSARKAAALCFVFGENQCPASGACVERIGMIYWRGPRVFEDTQLRVLCNDPQGCDISVTGLNLNTYDLSYSRVAALDSCGEPGGLGRLDIVRYPAGYTQDSPVEPLDDYFTSDDSFGQGSFAINNMGRGVLTCGASEAVSVTTASWGPADLQNSKVACDPVDVLEHVAAHCEGKAICVVYPHTPRDDETVRSYIGLKQEEFLRLSDPCPGTANEDLRLVGTHTCVAGTRSVTPEVAMVETTSRVAAGGANYSNPSTDAMDMVVKLPPDIAKVYELCWNPDPVITLQPARYNVKVGVAQIVPVAGLVDLISTVFERIDDANVEVVLRGILAEEVAVNTSIYLKQIPDEGAISCSNDDQENAIGKATFMSYESGDAGTTVIRYRIAAVDSEKAVCWRWTSQDFAAGGGGVQSILIGTLPGTVNPVSRAWGEMMCSLPGGTDCSIEFEPDSLLGTYPTEEEPGSGAVTGFTDYAQFANLHSHLRKGTKIGLIAGRESCPEDPQDLAYQRFTQTGIAEGDISDSEVQETTIGLPISGGKPSSLVSTMSVGLLHWLAVHKDAIVCWVNADECKTTKTPRFATCTATVGTLSWKGPIPTEWSVTAVDLVCRTGGRCRLKIPGRNMFKLDLSESPVAIVRTCGGDEGPGIAKLQQTPVLYPSQQADDGVQSGSLLQTTMSLSSNQRRAVRQLRRSCKMGSEDHADRCDTRLATGNTAMGFAAGSRRHPSFMEVLLGSRKAPSSSVDDSIEVVTTIKTGGEYAICWNPSALSTNLSDFTVNIGRVFSYGLEQIDALCYSGSYCELNFTYIGSSNPTLFVGVKAVDCSDPDLTTELGSGGVFKTTGRNTLSLSEPIPRRPQSSRVSYKLCWCDMNEVQECVGTSYSAPVGTLTVQFIEEKAVACQEAVGACSISFDASDFQGDSSGTIFLTQYSGTNADCMQPKKYVPHVSAIFGNIVVQVDQATLAATLGQHAAEQGSFAICRQMTAAIDEYTGSSNAVPEADENQVESAEPEQNAEGETPEQGAEEAGGNAAEPGAESGTQEGAVTPGVEPDGGEPVAPEVDSGGGESVAPGVDSGGGDSVAPGVDSGGGDSVAPGVDSGSGVAGTASEGVDEQSDLTTSQPEDLEAKSQTALGMVQLDDTGSDTSLQVTSSPALLGVLQFAGPASTEYQDETQVAVLGMATRIAVVTQGFDRFIDTDITADSSDIPTGVAHVRLVPAGGCGHDNGSNSVVLSLSQVIQKESDLPEKAIYSQEEILQINTGAIRKLDVCWCDLGTACKKDTDFTIPVLSVGLVAPEQDLVVKCPCGSKCPFEFQGVSEAPQHGVEPDYFVKNDGCSGAPAELPDQGHLVTVVSSVIAAEHSDDAVADVDRSPAGELETLNKQIQAFRAEVDRTSVFATGTTEGSREYAICYCAFRTGGCANDALIRIGTLTVYDVWRDKMSAVVADDVTIRPPSPPFSGIQGTLYAQAGAVTLPVSTLPDKAYQIDLSTLEGRRTPASVVDVRYCESEVTQSCDDEGAPRIDLTQIELKGPVSLSFEDECRLGFRCTIVTEVFNPTEEEKLAALASCGSSSEHDYGLSSGVRTAEDNPAKAVEVTFEWEKTLPDVGRSELDFCWCKKTNQVDCSAVDQYTLKVGTLYITGLAAGQEATCHVGSVCVAHLKGYRLVEEVVNVRVVAGECGTAGSEISGLPNGGIFVPEQVAESSAEVSLIEPFFGLAVETAAICQCPMPTQACESEADYAWEAGRYIFSGPSERVVINALSGQGVEVEIPWRGEQDTASDFFILTRDTMCSGTTSGLIDGVVDNGLGHLEDGEVAWEEFAYHGGIYSVCYCRRSTPLATGSANPFSGGSASASQHLCGTVAEYRVSVALVLLSGPVTSNAIFSCFGGLACHVDISVAGVDSLESQEFLDSAALQVSTESCGADVIMEAMLSDSEESSDTLDDSSSDAQMKTFNQRFGFPNVVTVSAGYYVACWKPATSSPALLLGDFVVKGPVADKTPLESSSGEDIDVAVTYVGLESSDEAKAMRIQIAPIPEGRENDAFDCASLNLSEAQPYLRYTNLNRAPDTVESVSVQFSRIVWKAVSILIDNQSPNVLPGSYFAICFCNGNRGDCSVSENYFFQTNKWAVGGLSQRTLDEPLPVGRTITLTLPGKRLPLHNHLMLLPSLDRSTFAERHCGDAGGAGDGRIISATRLAHVTDWVGFKEVTITSASRTILMCWCGGDNCQTGDKFRTFVGSLSVEFPKFEATSAVIGGTFTVTLRGSVLRAQDAITVVDQSKQCGEEGTDEMDASAVEVPVGLEVTDLIQLRQARVVHADSTADSTSLSVADTSTPLVWQSWPIKTKPSVSGRLRVCYCSSEGGVCTGASRFSVWVGNVQVKGPSTGEVEIVTVDGEAKVETSGVSLALTDKLRIFAKSLAASDTVRDRRELCESGITAESTTVVADYVSPDGRTETFPVDLEPGFRYVLCWSGGTGASTQSARANPAVTRAAPTVNLPSLYRANSGSNASTVQLAEEATAALNMLQQAASTGSATSALAPHAETETPTETWSYLDAITPTGFSTGLEFRLVQNFESEVLYIPGSPNVSHSYVAYVGQKDLQADCEEIKQNPLITMETMIHIQDDSVSFSVGRISEAGLYPVCVCDSTANECYDVGTAHVDKTYWKTVAELVYDNRFFMLPCVTRGIQASAADGQSWSEDRVWLPDGMGAWSFVLTTTDSDSKPAPVLKRTPATGSKAATWVNFYEKGLRSTVACATGSGQRIFFLGPGVVYMMDPVPGLTPDLSTATGQMFTHSVLKPVDFSVREPYIFFSDYETQVITSINIENPSLTHAFFPTDPVMLFSAGVNVMDTDENFMALCVADTFNHIVGRLNISFDTMNKPQSQVTGTPWTAYFGTPKTAQNGINGFSYPFALTSYSPQSTSEAELMSLLLVTELVSDRLVFLDLSNNGLTFYKQISLSERHLISGLQSVDKTVMLISRAWPPTSKSGGMDAYVSLLNLEDVGGDLYFTYPDFRSKLQSGLFYSFEPLITGSVIQSFKEVSGSDLAKMGLTLNSATGVISGTVSHTGPFTIAVAGGDLLETFTWTISGEAGCRSGEYFDSTNNACELCPVGTFRDQEANLQKCHDIKPYSTTLSPGSTHLAQCRCFPGFEIGNLGDCHPCGAGTYKSSISDTKCTGRCPGNMHSYIQGAENEEDLLCMCDAGYYEDGGGCTPCQQGYYCPGEHSPPEPCPENHTTKGGASKSISDCVCVAGYTKQGDACVECDRLSYKGTTGNDACTGCPQPAAKGDRDALIASTKLDEAQFTTKPGAKKVSDCMLCASGFFYDVSNGGCTPCRKNYYCPGTDQEPRACVENATTLRGGAESTFDCKCPKGYGGSVARNPLDKAIVCVACPKNTFQHLDGVMTDCLPCPPFTMTKSTKSASFSACVARPGFYLSSRLSDMSRSLAESRSDDGTVGDDVDLDDNALSGTTNSGWTTSSSNSERVRKAEVQYENMSDEELLDLPRLCQRGTGLIDILLPEVKMQKYTNSFEQCIIACARNVYCTSLTFTNEGNAVPAMTASVTNHTGTFIIGYWICELHMYGPPVDQETVASITDPITETVVPASWTVSCAMQRPESDTVWRSVTYEECPVNAYCPGDEEAQIYQCPASSVTLANRASAAEHCKCIPGYHLSGRQCEPCRVGTYKNTTDNTNCAECPTGFTTENLASISAYDCACIPGLYMIANADADAEGEADHTPADGSSNSSEDSIVTHPKPDADSSDSQAPAEQTEGHAGNTNQQVDAADGETPDTTHEEASEAESVSAVELRGGLLVRGDGGVLQRAFKASQNSASKRSSRALGDAIGEEQGLSFYQTTAAPWLQPDIRQELEKIVTLHPCVSCYKHMYCPGLWMDPPVNQIHMPPQHCPEGSTVPLSTALSDSVEKCLCMAGYAVVEGSTGGTHEDNAYFGCEKCAAGTYKELQENAPCAGRCMRDAETIEGAVAKIQCFCKIGKYAVVAEDAEGIITCQDCIAGGVCPGGLKTRARQAVEQDHSFVKITIDDHQVPFPSSGFYAVYKPLNETVWSPAMVPMVASFTGDTFKEFTDTGPAPDDHTDEGGANLDSTGGSGEPSSSAPVDPSGENEGQLLTGTTGAVSALQMRSRANDTSVHQYDRIPDIHPCVDDVRCRGGSHNSCVHGSAGYLCSACEEDYSEIRYKSGCQACLPLWLDSFIFILMRLVVCGIIWIITALTIIAVQQQACIHPVLIRIVMSHMFFLSVYGLMPATSQSQLAGWASIYRLFFFEFYFALHPYFKMPCFFRSLGIVMPEAHVWYWQHFFQIFVPFIDAVLLTIIGAICVATYKVMYSAYISRVLVVLEEARQAHGDDMWTEKTIRKIESERCLGMFRYIYGTSTPWENFVRLCTDLIPAYTAIWFWHFPTFVIECTMLMGCIETRYKSEDPISVLAAFPVQICSFENPYFLSGLILGGVGLLVWGVGSIAGFVAYMSGDHSSDTIEQRFKHGFLVNGYQYAYRWWEGVIGLRKTCVALIITMYVHANASGAQEIFRNSANLALTVLSTALQLQLEPFDKRSHDMANRMEFYGLMVNIIIGVIFQGSYYFEVFKYMGAIPLAVAIFYYLYVLWSLFVEWGRMVMMRPHLVSIPSLWRYYNRVTRSLARLYTSRNAKIYYNYITKDMVLEAATKSRVFHLRRLLLRRKKTSYRKINYENRTYFVAALSDSLSQLVIAWCQFTIPGDWLDFTIRYAFCYCFWQRYQDNRSLRVPLDLEEFEAVKPTLFSDWYYDSEKNDPQGEGDIDFGTEILEGGEITFNTAEQDFLDLMLDDDVYDDSPITLMELYVAVQSMQHVPQRQLRRLHLAYRERMTQAGDSTAPQLRKENHALEGELEELNRALLEMAGADENMPDLTFSPLDFFFTVEMVNQAQLEVERLRGLIESEIDDIARARAAQAVAVHLELSMNEAADVDKLLEAMETDERTTKEEEMTRIGYVEESTSRMEKKAGLAGRRARLAFADKRPPVNLDDKRRIKLGLAAGVGGAQRRRIGLVTRGAEGPPGAKRRIGRHEVEFHRTVQGLAAGAAPAAGLRSHMGTSSSLGDQLGDDRRTVRLGTNLSTPSAVGNKRTLRRDTSGASAELIVDTAPKAPAATRTLSPLLDREPPVVESEGSVGERRESPTPSRSPSGTTRTVGSVVRSVTPEPSDSVGREESGSEAPLISPSASSLASPRSLSPLTERRGSQSSDLGGRRRLGPLTGPRPPPPVGEAAPAEAPSPSPRSSSPLAAQPKGQGLPLGKRQLKKPGSPKQE.

Asn172 carries an N-linked (GlcNAc...) asparagine glycan. The chain crosses the membrane as a helical span at residues 223–243 (LVGFFLVPVFVVFFVLSSDAT). Disordered stretches follow at residues 248–275 (GVGV…SSPG) and 291–323 (RDTK…GKGF). Positions 263-275 (SVSSSSRASSSPG) are enriched in low complexity. Over residues 302–313 (SSRRSARARRRR) the composition is skewed to basic residues. 6 N-linked (GlcNAc...) asparagine glycosylation sites follow: Asn329, Asn589, Asn848, Asn1128, Asn1183, and Asn1402. A disordered region spans residues 1554 to 1574 (VLRSRSGPSHPSSVSQPSPSF). Residues 1557–1573 (SRSGPSHPSSVSQPSPS) are compositionally biased toward low complexity. Asn1622, Asn2578, Asn2664, Asn3094, and Asn3126 each carry an N-linked (GlcNAc...) asparagine glycan. The interval 3316–3445 (SNAVPEADEN…SDLTTSQPED (130 aa)) is disordered. A compositionally biased stretch (acidic residues) spans 3321–3340 (EADENQVESAEPEQNAEGET). A compositionally biased stretch (low complexity) spans 3342–3360 (EQGAEEAGGNAAEPGAESG). N-linked (GlcNAc...) asparagine glycosylation is found at Asn3546, Asn4367, Asn4823, Asn4901, Asn5186, Asn5546, and Asn5666. The tract at residues 5758–5799 (LAESRSDDGTVGDDVDLDDNALSGTTNSGWTTSSSNSERVRK) is disordered. Residues 5767–5776 (TVGDDVDLDD) show a composition bias toward acidic residues. Residues 5780–5794 (SGTTNSGWTTSSSNS) are compositionally biased toward low complexity. N-linked (GlcNAc...) asparagine glycans are attached at residues Asn5806, Asn5876, Asn5998, Asn6055, and Asn6369. The interval 6043-6115 (GEADHTPADG…EASEAESVSA (73 aa)) is disordered. The segment covering 6051 to 6060 (DGSSNSSEDS) has biased composition (polar residues). The span at 6391 to 6405 (EFTDTGPAPDDHTDE) shows a compositional bias: basic and acidic residues. Residues 6391–6436 (EFTDTGPAPDDHTDEGGANLDSTGGSGEPSSSAPVDPSGENEGQLL) form a disordered region. A compositionally biased stretch (polar residues) spans 6410-6423 (LDSTGGSGEPSSSA). The N-linked (GlcNAc...) asparagine glycan is linked to Asn6453. 8 helical membrane-spanning segments follow: residues 6520-6540 (IFIL…ALTI), 6552-6572 (VLIR…LMPA), 6578-6598 (LAGW…ALHP), 6627-6647 (IFVP…CVAT), 6770-6790 (LILG…GFVA), 6831-6851 (CVAL…QEIF), 6888-6908 (GLMV…FEVF), and 6912-6932 (GAIP…SLFV). The N-linked (GlcNAc...) asparagine glycan is linked to Asn7013. The helical transmembrane segment at 7017 to 7037 (FVAALSDSLSQLVIAWCQFTI) threads the bilayer. Asn7061 carries an N-linked (GlcNAc...) asparagine glycan. Positions 7174 to 7242 (APQLRKENHA…RGLIESEIDD (69 aa)) form a coiled coil. Residues 7379 to 7603 (AAPAAGLRSH…LKKPGSPKQE (225 aa)) are disordered. Positions 7408-7417 (LGTNLSTPSA) are enriched in polar residues. Residue Asn7411 is glycosylated (N-linked (GlcNAc...) asparagine). 3 stretches are compositionally biased toward low complexity: residues 7474 to 7496 (PTPS…SVTP), 7509 to 7541 (SEAP…SSDL), and 7560 to 7582 (GEAA…AAQP).

In terms of assembly, component of a complex, at least composed of cysteine repeat modular protein A (CRMPa), cysteine repeat modular protein B (CRMPb), micronemal protein 15 (MIC15) and thrombospondin type 1 domain-containing protein (TSP1).

The protein localises to the cell membrane. It is found in the endoplasmic reticulum. The protein resides in the golgi apparatus. Functionally, required for triggering rhoptry secretion. Plays a role in host cell invasion. In Toxoplasma gondii, this protein is Cysteine repeat modular protein B.